The primary structure comprises 248 residues: tRNA pseudouridine synthase A (248 aa).

The active-site Nucleophile is Asp53. Tyr111 is a binding site for substrate.

The protein belongs to the tRNA pseudouridine synthase TruA family. As to quaternary structure, homodimer.

The catalysed reaction is uridine(38/39/40) in tRNA = pseudouridine(38/39/40) in tRNA. Formation of pseudouridine at positions 38, 39 and 40 in the anticodon stem and loop of transfer RNAs. The protein is tRNA pseudouridine synthase A of Listeria monocytogenes serotype 4a (strain HCC23).